The primary structure comprises 44 residues: Somatoliberin (44 aa).

Leu44 is modified (leucine amide).

Belongs to the glucagon family.

It is found in the secreted. Its function is as follows. GRF is released by the hypothalamus and acts on the adenohypophyse to stimulate the secretion of growth hormone. The chain is Somatoliberin (GHRH) from Capra hircus (Goat).